Reading from the N-terminus, the 199-residue chain is Peroxiredoxin-1 (199 aa).

Ser-2 carries the post-translational modification N-acetylserine. In terms of domain architecture, Thioredoxin spans 6–165; the sequence is AKIGHPAPNF…TLRLVQAFQF (160 aa). An N6-acetyllysine; alternate modification is found at Lys-7. Lys-7 is covalently cross-linked (Glycyl lysine isopeptide (Lys-Gly) (interchain with G-Cter in SUMO2); alternate). Residues Lys-16 and Lys-27 each carry the N6-acetyllysine modification. Position 32 is a phosphoserine (Ser-32). Lys-35 is modified (N6-acetyllysine; alternate). Lys-35 is modified (N6-succinyllysine; alternate). Cys-52 serves as the catalytic Cysteine sulfenic acid (-SOH) intermediate. Thr-90 is subject to Phosphothreonine; by CDK1. A Glycyl lysine isopeptide (Lys-Gly) (interchain with G-Cter in SUMO2) cross-link involves residue Lys-120. Lys-136 carries the post-translational modification N6-acetyllysine. The segment at 176–199 is disordered; the sequence is GWKPGSDTIKPDVQKSKEYFSKQK. Residues 184–199 show a composition bias toward basic and acidic residues; sequence IKPDVQKSKEYFSKQK. A Glycyl lysine isopeptide (Lys-Gly) (interchain with G-Cter in SUMO1) cross-link involves residue Lys-185. Lys-197 carries the N6-acetyllysine modification.

It belongs to the peroxiredoxin family. AhpC/Prx1 subfamily. Homodimer; disulfide-linked, upon oxidation. 5 homodimers assemble to form a ring-like decamer. Interacts with GDPD5; forms a mixed-disulfide with GDPD5. Interacts with SESN1 and SESN2. Interacts with FAM107A. In terms of processing, phosphorylated on Thr-90 during the M-phase, which leads to a more than 80% decrease in enzymatic activity. Acetylation increases reducing activity and resistance to superoxidation. Deacetylated by HDAC6 which decreases reducing activity. Post-translationally, the enzyme can be inactivated by further oxidation of the cysteine sulfenic acid (C(P)-SOH) to sulphinic acid (C(P)-SO2H) instead of its condensation to a disulfide bond. It can be reactivated by forming a transient disulfide bond with sulfiredoxin SRXN1, which reduces the cysteine sulfinic acid in an ATP- and Mg-dependent manner.

It localises to the cytoplasm. Its subcellular location is the melanosome. It catalyses the reaction a hydroperoxide + [thioredoxin]-dithiol = an alcohol + [thioredoxin]-disulfide + H2O. Functionally, thiol-specific peroxidase that catalyzes the reduction of hydrogen peroxide and organic hydroperoxides to water and alcohols, respectively. Plays a role in cell protection against oxidative stress by detoxifying peroxides and as sensor of hydrogen peroxide-mediated signaling events. Might participate in the signaling cascades of growth factors and tumor necrosis factor-alpha by regulating the intracellular concentrations of H(2)O(2). Reduces an intramolecular disulfide bond in GDPD5 that gates the ability to GDPD5 to drive postmitotic motor neuron differentiation. This Homo sapiens (Human) protein is Peroxiredoxin-1 (PRDX1).